Reading from the N-terminus, the 215-residue chain is Ribonuclease T (215 aa).

An Exonuclease domain is found at 20-194 (VVIDVETAGF…YDTLQTAKLF (175 aa)). Residues aspartate 23, glutamate 25, histidine 181, and aspartate 186 each coordinate Mg(2+). The Proton donor/acceptor role is filled by histidine 181.

This sequence belongs to the RNase T family. In terms of assembly, homodimer. Mg(2+) is required as a cofactor.

Its function is as follows. Trims short 3' overhangs of a variety of RNA species, leaving a one or two nucleotide 3' overhang. Responsible for the end-turnover of tRNA: specifically removes the terminal AMP residue from uncharged tRNA (tRNA-C-C-A). Also appears to be involved in tRNA biosynthesis. The chain is Ribonuclease T from Yersinia pseudotuberculosis serotype O:1b (strain IP 31758).